We begin with the raw amino-acid sequence, 89 residues long: Small ribosomal subunit protein uS19 (89 aa).

Belongs to the universal ribosomal protein uS19 family.

In terms of biological role, protein S19 forms a complex with S13 that binds strongly to the 16S ribosomal RNA. This Bacteroides fragilis (strain YCH46) protein is Small ribosomal subunit protein uS19.